A 412-amino-acid chain; its full sequence is MWIQQLLGLSSMSIRWPGRSLGSHAWILIAMLQLAVDFPSCDSLGPGPEFRLLSRPQRPQRLWSLRSGPPTRLPTPAWSPRAARAERAHGPIQMQTPRARRAHRPRDQVATLGPKGGLTKPPAATRSSPSLASATASSSIVTAGAAEHQGLLRRGRRHTHDTEFNDFDFRGGRPTTETEFIAWGPTGDEDALESNTFPGGFGPTTVSILQTRKTTVATTTTTTAASTATAMTLQTKGVTESLDPWKRTPVGVSTTEPSTSPSSNGKDIQPPRILGETSGLAVHQIITITVSLIMVIAALITTLVLKNCCAPSGHTRRNSHQRKMNQQEESCQNLTDFTPARVPSSVDIFTAYNETLQCSHECVRASVPVYADETLHSTGEYKSTFNGNRTSSADRHLIPVAFVSEKWFEISC.

A signal peptide spans 1–43 (MWIQQLLGLSSMSIRWPGRSLGSHAWILIAMLQLAVDFPSCDS). The Extracellular portion of the chain corresponds to 44–284 (LGPGPEFRLL…GETSGLAVHQ (241 aa)). 2 disordered regions span residues 62 to 175 (LWSL…GRPT) and 243 to 271 (DPWK…IQPP). Over residues 121 to 146 (PPAATRSSPSLASATASSSIVTAGAA) the composition is skewed to low complexity. Basic and acidic residues predominate over residues 160–171 (HDTEFNDFDFRG). Over residues 248–263 (TPVGVSTTEPSTSPSS) the composition is skewed to low complexity. Residues 285 to 305 (IITITVSLIMVIAALITTLVL) form a helical membrane-spanning segment. The segment at 305–412 (LKNCCAPSGH…VSEKWFEISC (108 aa)) is targeting signals. The Cytoplasmic segment spans residues 306-412 (KNCCAPSGHT…VSEKWFEISC (107 aa)).

In terms of assembly, forms a complex with CDH1 and CTNNB1; interacts directly with CTNNB1. Interacts with AP1M2 and isoform 2 of BSG/CD147.

It localises to the basolateral cell membrane. The protein localises to the apical cell membrane. Its subcellular location is the cell junction. It is found in the adherens junction. In terms of biological role, plays a role in cell adhesion and cell migration. The chain is Adherens junction-associated protein 1 (Ajap1) from Mus musculus (Mouse).